A 1059-amino-acid polypeptide reads, in one-letter code: Carbamoyl phosphate synthase large chain (1059 aa).

Positions 1-401 (MPKRSDIKKI…SLLKACRSLE (401 aa)) are carboxyphosphate synthetic domain. ATP contacts are provided by arginine 129, arginine 169, glycine 175, glycine 176, arginine 208, isoleucine 210, glutamate 215, glycine 241, isoleucine 242, histidine 243, glutamine 284, and glutamate 298. Residues 133–327 (KQLMEELEQP…IAKLAAKIAV (195 aa)) form the ATP-grasp 1 domain. Glutamine 284, glutamate 298, and asparagine 300 together coordinate Mg(2+). Residues glutamine 284, glutamate 298, and asparagine 300 each coordinate Mn(2+). Positions 402–546 (IGVYHNEMSE…YSTYEWENES (145 aa)) are oligomerization domain. A carbamoyl phosphate synthetic domain region spans residues 547-929 (IKSDKESVIV…ALYKAFEASY (383 aa)). The ATP-grasp 2 domain maps to 671-861 (EQALKDLDIP…MAQVATNLIL (191 aa)). Residues arginine 707, serine 746, isoleucine 748, glutamate 752, glycine 777, valine 778, histidine 779, serine 780, glutamine 820, and glutamate 832 each contribute to the ATP site. 3 residues coordinate Mg(2+): glutamine 820, glutamate 832, and asparagine 834. Residues glutamine 820, glutamate 832, and asparagine 834 each coordinate Mn(2+). The 130-residue stretch at 930–1059 (LHLPTFGNVI…ESRSFTTEAI (130 aa)) folds into the MGS-like domain. The interval 930-1059 (LHLPTFGNVI…ESRSFTTEAI (130 aa)) is allosteric domain.

The protein belongs to the CarB family. In terms of assembly, composed of two chains; the small (or glutamine) chain promotes the hydrolysis of glutamine to ammonia, which is used by the large (or ammonia) chain to synthesize carbamoyl phosphate. Tetramer of heterodimers (alpha,beta)4. Mg(2+) serves as cofactor. Mn(2+) is required as a cofactor.

The enzyme catalyses hydrogencarbonate + L-glutamine + 2 ATP + H2O = carbamoyl phosphate + L-glutamate + 2 ADP + phosphate + 2 H(+). It carries out the reaction hydrogencarbonate + NH4(+) + 2 ATP = carbamoyl phosphate + 2 ADP + phosphate + 2 H(+). Its pathway is amino-acid biosynthesis; L-arginine biosynthesis; carbamoyl phosphate from bicarbonate: step 1/1. It participates in pyrimidine metabolism; UMP biosynthesis via de novo pathway; (S)-dihydroorotate from bicarbonate: step 1/3. In terms of biological role, large subunit of the glutamine-dependent carbamoyl phosphate synthetase (CPSase). CPSase catalyzes the formation of carbamoyl phosphate from the ammonia moiety of glutamine, carbonate, and phosphate donated by ATP, constituting the first step of 2 biosynthetic pathways, one leading to arginine and/or urea and the other to pyrimidine nucleotides. The large subunit (synthetase) binds the substrates ammonia (free or transferred from glutamine from the small subunit), hydrogencarbonate and ATP and carries out an ATP-coupled ligase reaction, activating hydrogencarbonate by forming carboxy phosphate which reacts with ammonia to form carbamoyl phosphate. The polypeptide is Carbamoyl phosphate synthase large chain (Streptococcus thermophilus (strain ATCC BAA-250 / LMG 18311)).